The sequence spans 205 residues: Outer-membrane lipoprotein LolB (205 aa).

Residues 1 to 17 (MFLRHFIVFSFIALLAG) form the signal peptide. The N-palmitoyl cysteine moiety is linked to residue Cys-18. Residue Cys-18 is the site of S-diacylglycerol cysteine attachment.

The protein belongs to the LolB family. Monomer.

Its subcellular location is the cell outer membrane. In terms of biological role, plays a critical role in the incorporation of lipoproteins in the outer membrane after they are released by the LolA protein. The protein is Outer-membrane lipoprotein LolB of Pseudomonas fluorescens (strain ATCC BAA-477 / NRRL B-23932 / Pf-5).